Here is a 135-residue protein sequence, read N- to C-terminus: Cytochrome c oxidase subunit 2 (135 aa).

Residues histidine 81, cysteine 116, cysteine 120, and histidine 124 each coordinate Cu cation.

The protein belongs to the cytochrome c oxidase subunit 2 family.

It localises to the cell membrane. The catalysed reaction is 4 Fe(II)-[cytochrome c] + O2 + 8 H(+)(in) = 4 Fe(III)-[cytochrome c] + 2 H2O + 4 H(+)(out). Functionally, subunits I and II form the functional core of the enzyme complex. Electrons originating in cytochrome c are transferred via heme a and Cu(A) to the binuclear center formed by heme a3 and Cu(B). In Thermus thermophilus, this protein is Cytochrome c oxidase subunit 2 (cbaB).